We begin with the raw amino-acid sequence, 84 residues long: uncharacterized protein (84 aa).

In terms of domain architecture, 2Fe-2S ferredoxin-type spans 2–84; the sequence is ARVTLRITGT…RAKGDIEIEM (83 aa). 4 residues coordinate [2Fe-2S] cluster: C37, C42, C45, and C74.

It depends on [2Fe-2S] cluster as a cofactor.

This is an uncharacterized protein from Escherichia coli O6:H1 (strain CFT073 / ATCC 700928 / UPEC).